A 245-amino-acid polypeptide reads, in one-letter code: tRNA1(Val) (adenine(37)-N6)-methyltransferase (245 aa).

The protein belongs to the methyltransferase superfamily. tRNA (adenine-N(6)-)-methyltransferase family.

It is found in the cytoplasm. It carries out the reaction adenosine(37) in tRNA1(Val) + S-adenosyl-L-methionine = N(6)-methyladenosine(37) in tRNA1(Val) + S-adenosyl-L-homocysteine + H(+). Specifically methylates the adenine in position 37 of tRNA(1)(Val) (anticodon cmo5UAC). The protein is tRNA1(Val) (adenine(37)-N6)-methyltransferase of Klebsiella pneumoniae (strain 342).